The chain runs to 154 residues: Protein X (154 aa).

The interval 68–117 (PCALRFTSARRMETTVNAHQILPKVLHKRTLGLSAMSTTDLEAYFKDCLF) is mitochondrial targeting sequence.

It belongs to the orthohepadnavirus protein X family. As to quaternary structure, may form homodimer. May interact with host CEBPA, CFLAR, CREB1, DDB1, E4F1, HBXIP, HSPD1/HSP60, NFKBIA, POLR2E and SMAD4. Interacts with host SMC5-SMC6 complex and induces its degradation. Interacts with host TRPC4AP; leading to prevent ubiquitination of TRPC4AP. Interacts with host PLSCR1; this interaction promotes ubiquitination and degradation of HBx and impairs HBx-mediated cell proliferation. Post-translationally, a fraction may be phosphorylated in insect cells and HepG2 cells, a human hepatoblastoma cell line. Phosphorylated in vitro by host protein kinase C or mitogen-activated protein kinase. N-acetylated in insect cells.

It is found in the host cytoplasm. The protein localises to the host nucleus. It localises to the host mitochondrion. Multifunctional protein that plays a role in silencing host antiviral defenses and promoting viral transcription. Does not seem to be essential for HBV infection. May be directly involved in development of cirrhosis and liver cancer (hepatocellular carcinoma). Most of cytosolic activities involve modulation of cytosolic calcium. The effect on apoptosis is controversial depending on the cell types in which the studies have been conducted. May induce apoptosis by localizing in mitochondria and causing loss of mitochondrial membrane potential. May also modulate apoptosis by binding host CFLAR, a key regulator of the death-inducing signaling complex (DISC). Promotes viral transcription by using the host E3 ubiquitin ligase DDB1 to target the SMC5-SMC6 complex to proteasomal degradation. This host complex would otherwise bind to viral episomal DNA, and prevents its transcription. Moderately stimulates transcription of many different viral and cellular transcription elements. Promoters and enhancers stimulated by HBx contain DNA binding sites for NF-kappa-B, AP-1, AP-2, c-EBP, ATF/CREB, or the calcium-activated factor NF-AT. In Hepatitis B virus genotype D subtype ayw (isolate France/Tiollais/1979) (HBV-D), this protein is Protein X.